A 108-amino-acid polypeptide reads, in one-letter code: uncharacterized protein (108 aa).

The tract at residues T74–H108 is disordered. The span at N84–S95 shows a compositional bias: polar residues.

This is an uncharacterized protein from Saccharomyces cerevisiae (strain ATCC 204508 / S288c) (Baker's yeast).